Consider the following 207-residue polypeptide: MEMSAQRLASNRTSPQSPSNSDYTWEYEYYEIGPVSFEGLKAHKYSIVIGFWVGLAVFVIFMFFVLTLLTKTGAPHQDNAESSERRFRMNSFVSDFGKPLESDKVFSRQGNEESRSLFHCYINEVEHLDRVKVCHQTTAIDSDVHLQEASRSSGRPEEELARFMKFDIPNFVNTEQSSFGEDDLLISEAPVLLENKPVSQTSRIDLD.

The disordered stretch occupies residues 1-21 (MEMSAQRLASNRTSPQSPSNS). Residues 7–21 (RLASNRTSPQSPSNS) show a composition bias toward polar residues. An N-linked (GlcNAc...) asparagine glycan is attached at asparagine 11. Residues 47–67 (IVIGFWVGLAVFVIFMFFVLT) form a helical membrane-spanning segment. Serine 91 carries the phosphoserine modification.

It belongs to the MRAP family. As to quaternary structure, homodimer and heterodimer. Forms antiparallel homodimers and heterodimers with MRAP. Interacts with MC1R, MC2R, MC3R and MC5R. Interacts with MC4R. As to expression, predominantly expressed in the brain, mainly in the pons and cerebellum but also in regions involved in energy homeostasis, such as the hypothalamus and brainstem.

It localises to the cell membrane. It is found in the endoplasmic reticulum membrane. In terms of biological role, modulator of melanocortin receptor 4 (MC4R), a receptor involved in energy homeostasis. Plays a central role in the control of energy homeostasis and body weight regulation by increasing ligand-sensitivity of MC4R and MC4R-mediated generation of cAMP. May also act as a negative regulator of MC2R: competes with MRAP for binding to MC2R and impairs the binding of corticotropin (ACTH) to MC2R. May also regulate activity of other melanocortin receptors (MC1R, MC3R and MC5R); however, additional evidence is required in vivo. The polypeptide is Melanocortin-2 receptor accessory protein 2 (Mrap2) (Mus musculus (Mouse)).